The primary structure comprises 145 residues: Large ribosomal subunit protein uL15 (145 aa).

Residues 1–52 (MFNLLKPKGASKRRKIVGRGPGSGLGKTSGRGQKGQKARNTSPRLGFEGGQT) form a disordered region. Residues 19 to 33 (RGPGSGLGKTSGRGQ) are compositionally biased toward gly residues.

Belongs to the universal ribosomal protein uL15 family. As to quaternary structure, part of the 50S ribosomal subunit.

In terms of biological role, binds to the 23S rRNA. The polypeptide is Large ribosomal subunit protein uL15 (Borreliella burgdorferi (strain ATCC 35210 / DSM 4680 / CIP 102532 / B31) (Borrelia burgdorferi)).